The chain runs to 227 residues: Protein GrpE (227 aa).

Positions 1–18 (MTQGNQKTEGNPPEQVTV) are enriched in polar residues. 2 disordered regions span residues 1-57 (MTQG…GAAT) and 193-227 (TEEGDGEAAATDEPTAAAAETRPPESDDNAGASGD). Residues 19–35 (TDKRRIDPETGEVRHVP) show a composition bias toward basic and acidic residues. Composition is skewed to low complexity over residues 41–50 (GGTAPQAATA) and 199–213 (EAAATDEPTAAAAET).

Belongs to the GrpE family. In terms of assembly, homodimer.

Its subcellular location is the cytoplasm. In terms of biological role, participates actively in the response to hyperosmotic and heat shock by preventing the aggregation of stress-denatured proteins, in association with DnaK and GrpE. It is the nucleotide exchange factor for DnaK and may function as a thermosensor. Unfolded proteins bind initially to DnaJ; upon interaction with the DnaJ-bound protein, DnaK hydrolyzes its bound ATP, resulting in the formation of a stable complex. GrpE releases ADP from DnaK; ATP binding to DnaK triggers the release of the substrate protein, thus completing the reaction cycle. Several rounds of ATP-dependent interactions between DnaJ, DnaK and GrpE are required for fully efficient folding. The protein is Protein GrpE of Mycolicibacterium paratuberculosis (strain ATCC BAA-968 / K-10) (Mycobacterium paratuberculosis).